The sequence spans 291 residues: Pantothenate synthetase (291 aa).

30–37 (MGYLHVGH) is a binding site for ATP. The active-site Proton donor is H37. Q61 is a binding site for (R)-pantoate. A beta-alanine-binding site is contributed by Q61. 147 to 150 (GEKD) lines the ATP pocket. (R)-pantoate is bound at residue Q153. Residues V176 and 184 to 187 (CSSR) contribute to the ATP site.

This sequence belongs to the pantothenate synthetase family. Homodimer.

The protein localises to the cytoplasm. The enzyme catalyses (R)-pantoate + beta-alanine + ATP = (R)-pantothenate + AMP + diphosphate + H(+). It participates in cofactor biosynthesis; (R)-pantothenate biosynthesis; (R)-pantothenate from (R)-pantoate and beta-alanine: step 1/1. Its function is as follows. Catalyzes the condensation of pantoate with beta-alanine in an ATP-dependent reaction via a pantoyl-adenylate intermediate. The protein is Pantothenate synthetase of Rhizobium meliloti (strain 1021) (Ensifer meliloti).